The sequence spans 459 residues: tRNA modification GTPase MnmE (459 aa).

(6S)-5-formyl-5,6,7,8-tetrahydrofolate is bound by residues R22, E85, and R124. The TrmE-type G domain occupies 221-380 (GLSTVIVGRP…LEIQIKDLFF (160 aa)). N231 provides a ligand contact to K(+). GTP is bound by residues 231–236 (NVGKSS), 250–256 (TEVAGTT), and 275–278 (DTAG). A Mg(2+)-binding site is contributed by S235. K(+)-binding residues include T250, V252, and T255. T256 contacts Mg(2+). (6S)-5-formyl-5,6,7,8-tetrahydrofolate is bound at residue K459.

Belongs to the TRAFAC class TrmE-Era-EngA-EngB-Septin-like GTPase superfamily. TrmE GTPase family. In terms of assembly, homodimer. Heterotetramer of two MnmE and two MnmG subunits. K(+) is required as a cofactor.

The protein localises to the cytoplasm. Its function is as follows. Exhibits a very high intrinsic GTPase hydrolysis rate. Involved in the addition of a carboxymethylaminomethyl (cmnm) group at the wobble position (U34) of certain tRNAs, forming tRNA-cmnm(5)s(2)U34. The sequence is that of tRNA modification GTPase MnmE from Staphylococcus epidermidis (strain ATCC 35984 / DSM 28319 / BCRC 17069 / CCUG 31568 / BM 3577 / RP62A).